Here is a 120-residue protein sequence, read N- to C-terminus: uncharacterized protein (120 aa).

Residues 22 to 44 traverse the membrane as a helical segment; it reads ITVASCIGAAQGALFSIASALLL. Residue N114 is glycosylated (N-linked (GlcNAc...) asparagine).

It is found in the membrane. This is an uncharacterized protein from Saccharomyces cerevisiae (strain ATCC 204508 / S288c) (Baker's yeast).